Reading from the N-terminus, the 311-residue chain is Ribose-5-phosphate isomerase (311 aa).

Over residues 22–32 the composition is skewed to gly residues; the sequence is AGGAASGGGGN. A disordered region spans residues 22 to 67; sequence AGGAASGGGGNSWDLPGSHVRLPGRAQSGTRGGAGNTSTSCGDSNS. Arginine 52 carries the omega-N-methylarginine modification. Over residues 57–67 the composition is skewed to polar residues; it reads NTSTSCGDSNS. Position 106 is a phosphoserine (serine 106).

The protein belongs to the ribose 5-phosphate isomerase family.

It carries out the reaction aldehydo-D-ribose 5-phosphate = D-ribulose 5-phosphate. Its pathway is carbohydrate degradation; pentose phosphate pathway; D-ribose 5-phosphate from D-ribulose 5-phosphate (non-oxidative stage): step 1/1. Functionally, catalyzes the reversible conversion of ribose-5-phosphate to ribulose 5-phosphate and participates in the first step of the non-oxidative branch of the pentose phosphate pathway. The protein is Ribose-5-phosphate isomerase of Homo sapiens (Human).